The chain runs to 134 residues: MKPSERRKARRLAVQAIYSWQLSGNNIADVEHEFLTEQKIDGIDVTYFRELLSGTATKQAQIDELITPHIERPYDEVSPIEKAVLRLATYELTFRKDVPYKVAINEAIELAKAFGAEDGHKFVNGILDKIVGRK.

This sequence belongs to the NusB family.

Its function is as follows. Involved in transcription antitermination. Required for transcription of ribosomal RNA (rRNA) genes. Binds specifically to the boxA antiterminator sequence of the ribosomal RNA (rrn) operons. In Shewanella woodyi (strain ATCC 51908 / MS32), this protein is Transcription antitermination protein NusB.